Consider the following 1379-residue polypeptide: Attractin-like protein 1 (1379 aa).

The segment at Met-1–Arg-23 is disordered. An N-terminal signal peptide occupies residues Met-1–Ala-52. Residues Leu-53–Gln-91 form the EGF-like 1 domain. The Extracellular portion of the chain corresponds to Leu-53–Leu-1230. 3 disulfides stabilise this stretch: Cys-63/Cys-79, Cys-81/Cys-90, and Cys-93/Cys-119. The N-linked (GlcNAc...) asparagine glycan is linked to Asn-76. One can recognise a CUB domain in the interval Cys-93 to Asn-209. 2 N-linked (GlcNAc...) asparagine glycosylation sites follow: Asn-174 and Asn-198. The EGF-like 2 domain occupies Ser-207–Asp-245. 3 disulfides stabilise this stretch: Cys-211-Cys-221, Cys-215-Cys-233, and Cys-235-Cys-244. Kelch repeat units lie at residues Phe-316–Glu-365, Ile-367–Ser-415, Val-427–Asp-475, Ser-480–Gly-531, Met-533–Gly-591, and Ser-592–Asn-638. Residue Asn-380 is glycosylated (N-linked (GlcNAc...) asparagine). PSI domains follow at residues Asn-614–Pro-657, Arg-666–His-709, and Ile-715–Leu-760. One can recognise a C-type lectin domain in the interval Ile-755–Glu-873. N-linked (GlcNAc...) asparagine glycans are attached at residues Asn-763, Asn-778, and Asn-898. A disulfide bond links Cys-776 and Cys-872. PSI domains follow at residues Pro-889–Ser-939 and Asn-942–Pro-1012. Intrachain disulfides connect Cys-1014–Cys-1022, Cys-1016–Cys-1028, Cys-1031–Cys-1040, Cys-1043–Cys-1057, Cys-1060–Cys-1069, Cys-1062–Cys-1076, Cys-1078–Cys-1088, and Cys-1091–Cys-1106. Laminin EGF-like domains lie at Cys-1014–Ala-1059 and Cys-1060–Tyr-1108. Asn-1157 is a glycosylation site (N-linked (GlcNAc...) asparagine). A helical transmembrane segment spans residues Val-1231–Val-1251. Residues Trp-1252 to Val-1379 are Cytoplasmic-facing. The tract at residues Lys-1354–Val-1379 is disordered.

Interacts with MC4R.

It is found in the membrane. May play a role in melanocortin signaling pathways that regulate energy homeostasis. The sequence is that of Attractin-like protein 1 (ATRNL1) from Homo sapiens (Human).